Here is a 178-residue protein sequence, read N- to C-terminus: Large ribosomal subunit protein uL6 (178 aa).

This sequence belongs to the universal ribosomal protein uL6 family. As to quaternary structure, part of the 50S ribosomal subunit.

Its function is as follows. This protein binds to the 23S rRNA, and is important in its secondary structure. It is located near the subunit interface in the base of the L7/L12 stalk, and near the tRNA binding site of the peptidyltransferase center. In Thermoplasma volcanium (strain ATCC 51530 / DSM 4299 / JCM 9571 / NBRC 15438 / GSS1), this protein is Large ribosomal subunit protein uL6.